We begin with the raw amino-acid sequence, 149 residues long: uncharacterized protein (149 aa).

This is an uncharacterized protein from Mycoplasma pneumoniae (strain ATCC 29342 / M129 / Subtype 1) (Mycoplasmoides pneumoniae).